A 207-amino-acid chain; its full sequence is Proteasome subunit beta 2 (207 aa).

The propeptide at 1 to 13 (METNNKLKILKTG) is removed in mature form; by autocatalysis. Thr14 acts as the Nucleophile in catalysis.

The protein belongs to the peptidase T1B family. In terms of assembly, the 20S proteasome core is composed of 14 alpha and 14 beta subunits that assemble into four stacked heptameric rings, resulting in a barrel-shaped structure. The two inner rings, each composed of seven catalytic beta subunits, are sandwiched by two outer rings, each composed of seven alpha subunits. The catalytic chamber with the active sites is on the inside of the barrel. Has a gated structure, the ends of the cylinder being occluded by the N-termini of the alpha-subunits. Is capped at one or both ends by the proteasome regulatory ATPase, PAN.

The protein localises to the cytoplasm. The catalysed reaction is Cleavage of peptide bonds with very broad specificity.. The formation of the proteasomal ATPase PAN-20S proteasome complex, via the docking of the C-termini of PAN into the intersubunit pockets in the alpha-rings, triggers opening of the gate for substrate entry. Interconversion between the open-gate and close-gate conformations leads to a dynamic regulation of the 20S proteasome proteolysis activity. Its function is as follows. Component of the proteasome core, a large protease complex with broad specificity involved in protein degradation. In Sulfurisphaera tokodaii (strain DSM 16993 / JCM 10545 / NBRC 100140 / 7) (Sulfolobus tokodaii), this protein is Proteasome subunit beta 2.